Reading from the N-terminus, the 94-residue chain is MKNAYKKVRVRYPVKRPDVKRKQRGPRAETQESRFLAAAVADEISGLSPLEKKAISLLEAKNNNKAQKLLRKRLGSHKRAVAKVEKLARMLLEK.

Positions 1–25 (MKNAYKKVRVRYPVKRPDVKRKQRG) are enriched in basic residues. A disordered region spans residues 1–30 (MKNAYKKVRVRYPVKRPDVKRKQRGPRAET).

This sequence belongs to the eukaryotic ribosomal protein eL36 family. Component of the large ribosomal subunit.

The protein resides in the cytoplasm. The protein is Large ribosomal subunit protein eL36 (RPL36) of Encephalitozoon cuniculi (strain GB-M1) (Microsporidian parasite).